Reading from the N-terminus, the 230-residue chain is MKIGIIGAMEPEVAHLVESMEKPSSTTIAGIEFVAGQLAGKEVIVTRSGIGKVTASIATTLLIEKYAPDAIINTGSAGGFADDLAIGDIVISSEVRHHDVDVTAFGYEIGQMAQQPAAFIPDAKLVAAAQKAVASLGEVKAIEGLICTGDSFICDPVRTKTMLENFPTMAACEMEGAAIAQVCHQFDVPFVVIRSLSDNANNDSPVDFDEYIVKAGHHSALMVIALLEQL.

Glutamate 12 functions as the Proton acceptor in the catalytic mechanism. Residues glycine 78, isoleucine 153, and 174–175 each bind substrate; that span reads ME. The active-site Proton donor is aspartate 198.

This sequence belongs to the PNP/UDP phosphorylase family. MtnN subfamily.

The enzyme catalyses S-adenosyl-L-homocysteine + H2O = S-(5-deoxy-D-ribos-5-yl)-L-homocysteine + adenine. It catalyses the reaction S-methyl-5'-thioadenosine + H2O = 5-(methylsulfanyl)-D-ribose + adenine. It carries out the reaction 5'-deoxyadenosine + H2O = 5-deoxy-D-ribose + adenine. It functions in the pathway amino-acid biosynthesis; L-methionine biosynthesis via salvage pathway; S-methyl-5-thio-alpha-D-ribose 1-phosphate from S-methyl-5'-thioadenosine (hydrolase route): step 1/2. Catalyzes the irreversible cleavage of the glycosidic bond in both 5'-methylthioadenosine (MTA) and S-adenosylhomocysteine (SAH/AdoHcy) to adenine and the corresponding thioribose, 5'-methylthioribose and S-ribosylhomocysteine, respectively. Also cleaves 5'-deoxyadenosine, a toxic by-product of radical S-adenosylmethionine (SAM) enzymes, into 5-deoxyribose and adenine. The polypeptide is 5'-methylthioadenosine/S-adenosylhomocysteine nucleosidase (Shewanella pealeana (strain ATCC 700345 / ANG-SQ1)).